The sequence spans 218 residues: Ribosomal RNA small subunit methyltransferase G (218 aa).

S-adenosyl-L-methionine-binding positions include Gly86, Leu91, 137–138 (AE), and Arg153.

This sequence belongs to the methyltransferase superfamily. RNA methyltransferase RsmG family.

The protein localises to the cytoplasm. The enzyme catalyses guanosine(527) in 16S rRNA + S-adenosyl-L-methionine = N(7)-methylguanosine(527) in 16S rRNA + S-adenosyl-L-homocysteine. In terms of biological role, specifically methylates the N7 position of guanine in position 527 of 16S rRNA. The polypeptide is Ribosomal RNA small subunit methyltransferase G (Nitratidesulfovibrio vulgaris (strain ATCC 29579 / DSM 644 / CCUG 34227 / NCIMB 8303 / VKM B-1760 / Hildenborough) (Desulfovibrio vulgaris)).